Reading from the N-terminus, the 445-residue chain is Phosphoglucosamine mutase (445 aa).

The active-site Phosphoserine intermediate is S102. The Mg(2+) site is built by S102, D241, D243, and D245. S102 is subject to Phosphoserine.

It belongs to the phosphohexose mutase family. Mg(2+) serves as cofactor. In terms of processing, activated by phosphorylation.

The enzyme catalyses alpha-D-glucosamine 1-phosphate = D-glucosamine 6-phosphate. Its function is as follows. Catalyzes the conversion of glucosamine-6-phosphate to glucosamine-1-phosphate. This is Phosphoglucosamine mutase from Acinetobacter baumannii (strain AB0057).